The following is a 166-amino-acid chain: Lipoprotein signal peptidase (166 aa).

3 consecutive transmembrane segments (helical) span residues 12–32 (LPIA…KYLV), 66–86 (MEGW…LWLW), and 101–121 (AMII…GYVI). Active-site residues include Asp122 and Asp140. The helical transmembrane segment at 132 to 152 (SFAVFNLADSFITVGAGAIIL) threads the bilayer.

The protein belongs to the peptidase A8 family.

The protein localises to the cell inner membrane. It catalyses the reaction Release of signal peptides from bacterial membrane prolipoproteins. Hydrolyzes -Xaa-Yaa-Zaa-|-(S,diacylglyceryl)Cys-, in which Xaa is hydrophobic (preferably Leu), and Yaa (Ala or Ser) and Zaa (Gly or Ala) have small, neutral side chains.. It functions in the pathway protein modification; lipoprotein biosynthesis (signal peptide cleavage). In terms of biological role, this protein specifically catalyzes the removal of signal peptides from prolipoproteins. In Sinorhizobium fredii (strain NBRC 101917 / NGR234), this protein is Lipoprotein signal peptidase.